The following is a 146-amino-acid chain: Hemoglobin subunit beta (146 aa).

Val-1 carries the post-translational modification N-acetylvaline. The region spanning 2 to 146 (HLTGEEKAAV…VANALAHKYH (145 aa)) is the Globin domain. The residue at position 12 (Thr-12) is a Phosphothreonine. Ser-44 is subject to Phosphoserine. Residue Lys-59 is modified to N6-acetyllysine. Residue His-63 participates in heme b binding. Residue Lys-82 is modified to N6-acetyllysine. His-92 contacts heme b. Cys-93 bears the S-nitrosocysteine mark. N6-acetyllysine is present on Lys-144.

Belongs to the globin family. In terms of assembly, heterotetramer of two alpha chains and two beta chains. Red blood cells.

Its function is as follows. Involved in oxygen transport from the lung to the various peripheral tissues. The sequence is that of Hemoglobin subunit beta (HBB) from Mustela putorius furo (European domestic ferret).